The chain runs to 226 residues: Glutathione peroxidase 3 (226 aa).

Positions 1–24 (MARLFRASCLLSLLLAGFIPPSQG) are cleaved as a signal peptide. Selenocysteine 73 is a catalytic residue. Selenocysteine 73 is a non-standard amino acid (selenocysteine).

This sequence belongs to the glutathione peroxidase family. Homotetramer. Secreted in plasma.

Its subcellular location is the secreted. The catalysed reaction is 2 glutathione + H2O2 = glutathione disulfide + 2 H2O. The enzyme catalyses tert-butyl hydroperoxide + 2 glutathione = tert-butanol + glutathione disulfide + H2O. Protects cells and enzymes from oxidative damage, by catalyzing the reduction of hydrogen peroxide, lipid peroxides and organic hydroperoxide, by glutathione. The chain is Glutathione peroxidase 3 from Bos taurus (Bovine).